The following is a 360-amino-acid chain: A-type ATP synthase subunit C (360 aa).

Residues Met1 to Asn25 form a disordered region.

This sequence belongs to the V-ATPase V0D/AC39 subunit family. As to quaternary structure, has multiple subunits with at least A(3), B(3), C, D, E, F, H, I and proteolipid K(x).

The protein localises to the cell membrane. In terms of biological role, component of the A-type ATP synthase that produces ATP from ADP in the presence of a proton gradient across the membrane. This is A-type ATP synthase subunit C from Methanosarcina barkeri (strain Fusaro / DSM 804).